Consider the following 314-residue polypeptide: tRNA dimethylallyltransferase 1 (314 aa).

8–15 provides a ligand contact to ATP; it reads GPTGTGKS. Substrate is bound at residue 10–15; sequence TGTGKS.

It belongs to the IPP transferase family. As to quaternary structure, monomer. The cofactor is Mg(2+).

The enzyme catalyses adenosine(37) in tRNA + dimethylallyl diphosphate = N(6)-dimethylallyladenosine(37) in tRNA + diphosphate. Its function is as follows. Catalyzes the transfer of a dimethylallyl group onto the adenine at position 37 in tRNAs that read codons beginning with uridine, leading to the formation of N6-(dimethylallyl)adenosine (i(6)A). This is tRNA dimethylallyltransferase 1 from Mycobacterium marinum (strain ATCC BAA-535 / M).